The sequence spans 1007 residues: SUPPRESSOR OF ABI3-5 (1007 aa).

Disordered stretches follow at residues 1–185 (MDPS…RDRE) and 204–269 (ESPH…FSAT). Basic and acidic residues-rich tracts occupy residues 40–49 (PDERLMRDDV), 94–120 (YYHDSEAGSRNGHYRDHEHERSSRYDG), 138–185 (HSRD…RDRE), and 204–214 (ESPHKRYEKSR). Over residues 227 to 236 (RSPRGRSHGR) the composition is skewed to basic residues. Residues 237–264 (SYREDSYEGDHWNESERRREYEDRHNQD) show a composition bias toward basic and acidic residues. Residues 272–352 (ATVVVKGLSM…RKLMFHYSQP (81 aa)) enclose the RRM 1 domain. The RanBP2-type zinc finger occupies 378 to 407 (VPTDWICTICGCINFARRTSCFQCNEPKTK). Positions 432–512 (HVLVVRGLDE…KILRVAYAKS (81 aa)) constitute an RRM 2 domain. Disordered regions lie at residues 556-581 (GEKQNTGGQAQGVGEIESQKGTSAPQ), 631-656 (PDQNNESKVTENQPDSAKKEKSSQQK), 725-755 (HETQIQRPSPSLGDNPPTVSAEARSSFSTGQ), 771-797 (STSNHGVSALTTAESSSSSTTGGTLMG), 810-910 (ASSS…GITT), and 945-977 (SGLGKDGSGMKEPVQAQGVDRRAGLGSQQKKVD). Residues 631–645 (PDQNNESKVTENQPD) show a composition bias toward polar residues. 2 stretches are compositionally biased toward low complexity: residues 778 to 793 (SALTTAESSSSSTTGG) and 823 to 835 (PSASPASVSVSGS). Over residues 849–867 (THREQPQTSYRDRAAERRN) the composition is skewed to basic and acidic residues. The G-patch domain maps to 928–974 (ESNVGNRMLRNMGWHEGSGLGKDGSGMKEPVQAQGVDRRAGLGSQQK).

In terms of assembly, interacts with the pre-spliceosomal component U2AF65A. Ubiquitous with highest expression in siliques toward the end of seed maturation.

It is found in the nucleus. Its function is as follows. Splicing factor that controls alternative splicing of the developmental regulator ABI3. Reduces splicing of a cryptic intron in ABI3, leading to a decreased in ABI3-beta transcript. Regulates the splicing of the receptor-like kinase SNC4/LRKL-2.6. This Arabidopsis thaliana (Mouse-ear cress) protein is SUPPRESSOR OF ABI3-5.